The primary structure comprises 587 residues: Protein IQ-DOMAIN 31 (587 aa).

Residues 57–80 (ETNTVDRSGGMLETQNVGPEEISD) are disordered. The residue at position 79 (Ser-79) is a Phosphoserine. IQ domains lie at 112–140 (REIA…GIIR), 141–163 (LQAL…SVMG), and 164–188 (IVRL…VYRK). Positions 149 to 159 (LVRRQAVATLF) are calmodulin-binding. Positions 176 to 183 (IRKSDIGV) match the Nuclear localization signal motif. Residues 344-587 (NPVVESSIQP…AKTTPAERKR (244 aa)) are disordered. Composition is skewed to basic and acidic residues over residues 357–373 (PRKE…KTRE) and 390–413 (CDEK…EMEV). Polar residues predominate over residues 424 to 434 (ALDSSLVNQID). Basic and acidic residues-rich tracts occupy residues 435–472 (SNEK…ENQK) and 482–494 (KTER…HHET). Polar residues-rich tracts occupy residues 495 to 506 (SPSIPSYMQATK) and 544 to 561 (RITS…SGDK).

Belongs to the IQD family. As to quaternary structure, binds to multiple calmodulin (CaM) in the presence of Ca(2+) and CaM-like proteins.

It is found in the nucleus. The protein resides in the nucleus envelope. Its subcellular location is the cytoplasm. It localises to the cytoskeleton. The protein localises to the cell membrane. Functionally, may be involved in cooperative interactions with calmodulins or calmodulin-like proteins. Recruits calmodulin proteins to microtubules, thus being a potential scaffold in cellular signaling and trafficking. May associate with nucleic acids and regulate gene expression at the transcriptional or post-transcriptional level. The polypeptide is Protein IQ-DOMAIN 31 (Arabidopsis thaliana (Mouse-ear cress)).